A 110-amino-acid polypeptide reads, in one-letter code: UPF0213 protein DVU_3309 (110 aa).

Positions 8–83 (EVWFVYLLRC…KRQPTDQKLA (76 aa)) constitute a GIY-YIG domain.

It belongs to the UPF0213 family.

This Nitratidesulfovibrio vulgaris (strain ATCC 29579 / DSM 644 / CCUG 34227 / NCIMB 8303 / VKM B-1760 / Hildenborough) (Desulfovibrio vulgaris) protein is UPF0213 protein DVU_3309.